Here is a 248-residue protein sequence, read N- to C-terminus: Tryptophan synthase alpha chain (248 aa).

Active-site proton acceptor residues include E36 and D47.

It belongs to the TrpA family. Tetramer of two alpha and two beta chains.

The enzyme catalyses (1S,2R)-1-C-(indol-3-yl)glycerol 3-phosphate + L-serine = D-glyceraldehyde 3-phosphate + L-tryptophan + H2O. Its pathway is amino-acid biosynthesis; L-tryptophan biosynthesis; L-tryptophan from chorismate: step 5/5. Functionally, the alpha subunit is responsible for the aldol cleavage of indoleglycerol phosphate to indole and glyceraldehyde 3-phosphate. The chain is Tryptophan synthase alpha chain from Pyrococcus abyssi (strain GE5 / Orsay).